Reading from the N-terminus, the 943-residue chain is U3 small nucleolar RNA-associated protein 12 (943 aa).

WD repeat units follow at residues 77-107 (AKPA…KVWD), 119-149 (GHKA…IVWD), 161-190 (SHKD…KLWD), 202-230 (AHTG…KIWK), 389-418 (GQRT…KIWN), 428-458 (FECG…QLFD), 471-501 (AHDA…KFWD), 571-601 (GHKL…KIWG), 613-643 (AHQD…KYWD), and 655-685 (AHQS…RIWE). A disordered region spans residues 715–739 (EGNGDDAFKADASGEGVEDEASGVH).

Belongs to the WD repeat WDR3/UTP12 family. In terms of assembly, interacts with snoRNA U3. Interacts with MPP10. Component of the ribosomal small subunit (SSU) processome composed of at least 40 protein subunits and snoRNA U3.

It localises to the nucleus. Its subcellular location is the nucleolus. Functionally, involved in nucleolar processing of pre-18S ribosomal RNA. The chain is U3 small nucleolar RNA-associated protein 12 (DIP2) from Saccharomyces cerevisiae (strain ATCC 204508 / S288c) (Baker's yeast).